The following is a 469-amino-acid chain: Acetyl-CoA decarbonylase/synthase complex subunit beta 1 (469 aa).

Residues Cys-189, Cys-192, Cys-278, and Cys-280 each contribute to the [Ni-Fe-S] cluster site.

It belongs to the CdhC family. As to quaternary structure, monomer. The ACDS complex is made up of alpha, epsilon, beta, gamma and delta chains with a probable stoichiometry of (alpha(2)epsilon(2))(4)-beta(8)-(gamma(1)delta(1))(8) (Potential). Requires [Ni-Fe-S] cluster as cofactor.

It catalyses the reaction Co(I)-[corrinoid Fe-S protein] + acetyl-CoA + H(+) = methyl-Co(III)-[corrinoid Fe-S protein] + CO + CoA. Its pathway is one-carbon metabolism; methanogenesis from acetate. Functionally, part of a complex that catalyzes the reversible cleavage of acetyl-CoA, allowing growth on acetate as sole source of carbon and energy. The alpha-epsilon complex generates CO from CO(2), while the beta subunit (this protein) combines the CO with CoA and a methyl group to form acetyl-CoA. The methyl group, which is incorporated into acetyl-CoA, is transferred to the beta subunit by a corrinoid iron-sulfur protein (the gamma-delta complex). This Methanosarcina thermophila protein is Acetyl-CoA decarbonylase/synthase complex subunit beta 1 (cdhC1).